We begin with the raw amino-acid sequence, 504 residues long: D-alanine--D-alanyl carrier protein ligase (504 aa).

Thr-152–Ser-153 provides a ligand contact to ATP. Asp-197 serves as a coordination point for D-alanine. Asn-292 to Thr-297 is an ATP binding site. Val-301 lines the D-alanine pocket. ATP-binding positions include Asp-383, Tyr-394–Arg-397, and Lys-492. Lys-492 lines the D-alanine pocket.

Belongs to the ATP-dependent AMP-binding enzyme family. DltA subfamily.

It is found in the cytoplasm. The catalysed reaction is holo-[D-alanyl-carrier protein] + D-alanine + ATP = D-alanyl-[D-alanyl-carrier protein] + AMP + diphosphate. It functions in the pathway cell wall biogenesis; lipoteichoic acid biosynthesis. In terms of biological role, catalyzes the first step in the D-alanylation of lipoteichoic acid (LTA), the activation of D-alanine and its transfer onto the D-alanyl carrier protein (Dcp) DltC. In an ATP-dependent two-step reaction, forms a high energy D-alanyl-AMP intermediate, followed by transfer of the D-alanyl residue as a thiol ester to the phosphopantheinyl prosthetic group of the Dcp. D-alanylation of LTA plays an important role in modulating the properties of the cell wall in Gram-positive bacteria, influencing the net charge of the cell wall. The chain is D-alanine--D-alanyl carrier protein ligase from Bacillus cereus (strain AH187).